The chain runs to 311 residues: Probable manganese-dependent inorganic pyrophosphatase (311 aa).

H9, D13, D15, D77, H99, and D151 together coordinate Mn(2+).

This sequence belongs to the PPase class C family. Mn(2+) serves as cofactor.

The protein localises to the cytoplasm. It carries out the reaction diphosphate + H2O = 2 phosphate + H(+). In Streptococcus pyogenes serotype M49 (strain NZ131), this protein is Probable manganese-dependent inorganic pyrophosphatase.